The chain runs to 152 residues: Ribonuclease pancreatic gamma-type (152 aa).

The signal sequence occupies residues 1-25; the sequence is MGLEKSLFLFSLLVLVLGWVQPSLG. 2 residues coordinate substrate: Lys35 and Arg38. The Proton acceptor role is filled by His40. Intrachain disulfides connect Cys54/Cys112, Cys68/Cys123, Cys86/Cys138, and Cys93/Cys100. Substrate-binding positions include 69–73, Lys94, and Arg113; that span reads KSMNT. Residue His147 is the Proton donor of the active site.

Belongs to the pancreatic ribonuclease family. As to quaternary structure, monomer.

It localises to the secreted. It carries out the reaction an [RNA] containing cytidine + H2O = an [RNA]-3'-cytidine-3'-phosphate + a 5'-hydroxy-ribonucleotide-3'-[RNA].. The catalysed reaction is an [RNA] containing uridine + H2O = an [RNA]-3'-uridine-3'-phosphate + a 5'-hydroxy-ribonucleotide-3'-[RNA].. Functionally, endonuclease that catalyzes the cleavage of RNA on the 3' side of pyrimidine nucleotides. Acts on single-stranded and double-stranded RNA. The protein is Ribonuclease pancreatic gamma-type of Rattus norvegicus (Rat).